Here is a 467-residue protein sequence, read N- to C-terminus: Uronate isomerase (467 aa).

This sequence belongs to the metallo-dependent hydrolases superfamily. Uronate isomerase family.

The enzyme catalyses D-glucuronate = D-fructuronate. It catalyses the reaction aldehydo-D-galacturonate = keto-D-tagaturonate. It functions in the pathway carbohydrate metabolism; pentose and glucuronate interconversion. This is Uronate isomerase from Staphylococcus haemolyticus (strain JCSC1435).